The primary structure comprises 101 residues: NAD(P)H-quinone oxidoreductase subunit 4L, chloroplastic (101 aa).

Helical transmembrane passes span 2–22, 32–52, and 61–81; these read MLEH…YGLI, MCLE…SDFF, and IFSI…PAIV.

This sequence belongs to the complex I subunit 4L family. In terms of assembly, NDH is composed of at least 16 different subunits, 5 of which are encoded in the nucleus.

It is found in the plastid. It localises to the chloroplast thylakoid membrane. It catalyses the reaction a plastoquinone + NADH + (n+1) H(+)(in) = a plastoquinol + NAD(+) + n H(+)(out). It carries out the reaction a plastoquinone + NADPH + (n+1) H(+)(in) = a plastoquinol + NADP(+) + n H(+)(out). Functionally, NDH shuttles electrons from NAD(P)H:plastoquinone, via FMN and iron-sulfur (Fe-S) centers, to quinones in the photosynthetic chain and possibly in a chloroplast respiratory chain. The immediate electron acceptor for the enzyme in this species is believed to be plastoquinone. Couples the redox reaction to proton translocation, and thus conserves the redox energy in a proton gradient. In Fagopyrum esculentum subsp. ancestrale (Wild buckwheat), this protein is NAD(P)H-quinone oxidoreductase subunit 4L, chloroplastic.